The sequence spans 238 residues: Small ribosomal subunit protein eS4 (238 aa).

The S4 RNA-binding domain maps to 38–101 (LPLALIIRDV…GEVYRVVPDA (64 aa)).

This sequence belongs to the eukaryotic ribosomal protein eS4 family.

The chain is Small ribosomal subunit protein eS4 from Pyrobaculum aerophilum (strain ATCC 51768 / DSM 7523 / JCM 9630 / CIP 104966 / NBRC 100827 / IM2).